We begin with the raw amino-acid sequence, 243 residues long: Ribonuclease 3 (243 aa).

Positions 15–144 (NDTISKIINY…LIGAIYIDGG (130 aa)) constitute an RNase III domain. E57 contacts Mg(2+). D61 is a catalytic residue. Residues N130 and E133 each contribute to the Mg(2+) site. E133 is a catalytic residue. The DRBM domain maps to 169-238 (DPKTSLQEWT…AELMLEKINN (70 aa)).

The protein belongs to the ribonuclease III family. As to quaternary structure, homodimer. It depends on Mg(2+) as a cofactor.

The protein resides in the cytoplasm. It carries out the reaction Endonucleolytic cleavage to 5'-phosphomonoester.. Its function is as follows. Digests double-stranded RNA. Involved in the processing of primary rRNA transcript to yield the immediate precursors to the large and small rRNAs (23S and 16S). Processes some mRNAs, and tRNAs when they are encoded in the rRNA operon. Processes pre-crRNA and tracrRNA of type II CRISPR loci if present in the organism. This chain is Ribonuclease 3, found in Wolbachia sp. subsp. Brugia malayi (strain TRS).